Consider the following 326-residue polypeptide: MSFLSGFFGPICEIEVVLNDAETRKVSEIKTEEGKVEKHFLFYDGESVAGKVNIVFKQPGKRLEHHGIRIEFVGQIELFNDKSNTHEFVNLVKELALPGELTQSRNYDFEFMQVEKPYESYIGSNVRLRYFLKVTIVRRLTDLVKEYDLIVHQLATYPDVNNSIKMEVGIEDCLHIEFEYNKSKYHLKDVIVGKIYFLLVRIKIQHMELQLIKKEITGIGPSTTTETETVAKYEIMDGAPVKGESIPIRLFIAGYDPTPTMRDVNKKFSVRYFLNLVLVDEEDRRYFKQQEIVLWRKAPEKIKKRTNFHQRFEPQEPQASAEEPEI.

The disordered stretch occupies residues 306–326 (TNFHQRFEPQEPQASAEEPEI). Positions 315-326 (QEPQASAEEPEI) are enriched in low complexity.

This sequence belongs to the VPS26 family. Component of the heterotrimeric retromer cargo-selective complex (CSC) which is believed to associate with variable sorting nexins to form functionally distinct retromer complex variants.

Its subcellular location is the cytoplasm. The protein localises to the endosome membrane. It localises to the early endosome. Its function is as follows. Acts as a component of the retromer cargo-selective complex (CSC). The CSC is believed to be the core functional component of retromer or respective retromer complex variants acting to prevent missorting of selected transmembrane cargo proteins into the lysosomal degradation pathway. Retromer mediates retrograde transport of cargo proteins from endosomes to the trans-Golgi network (TGN). This Xenopus laevis (African clawed frog) protein is Vacuolar protein sorting-associated protein 26A-A (vps26a-a).